We begin with the raw amino-acid sequence, 1413 residues long: Zinc finger SWIM domain-containing protein 8 (1413 aa).

Residues serine 36, serine 48, and serine 53 each carry the phosphoserine modification. The tract at residues 45–65 is disordered; the sequence is RKQSAGPNSPTGGGGGGGSGG. Positions 55 to 65 are enriched in gly residues; it reads TGGGGGGGSGG. The SWIM-type zinc finger occupies 172-208; sequence YNVAVMFDRCRVTSCSCTCGAGAKWCTHVVALCLFRI. A disordered region spans residues 600–817; sequence ESQTHKPQTL…ESHAPHVPNQ (218 aa). Residues 604 to 625 are compositionally biased toward polar residues; the sequence is HKPQTLSSFYSSSRPATASQRS. Over residues 704 to 715 the composition is skewed to gly residues; the sequence is SRGGYNGRGWGS. Residue threonine 724 is modified to Phosphothreonine. Over residues 729 to 744 the composition is skewed to polar residues; it reads IDSSAPETTSDSSPTL. 3 positions are modified to phosphoserine: serine 738, serine 741, and serine 745. The segment covering 759 to 794 has biased composition (low complexity); sequence GRGQDSDSISSSSSDSLGSSSSSGSRRASASGGARA. Basic and acidic residues predominate over residues 795-811; sequence KTVEVGRYKGRRPESHA. Phosphoserine is present on residues serine 852 and serine 1412.

Belongs to the ZSWIM8 family. Component of the SCF-like E3 ubiquitin-protein ligase complex which contains CUL3, RBX1, ELOB, ELOC and ZSWIM8. Interacts with DAB1.

It localises to the cytoplasm. The protein resides in the cytosol. It functions in the pathway protein modification; protein ubiquitination. Functionally, substrate recognition component of a SCF-like E3 ubiquitin-protein ligase complex that promotes target-directed microRNA degradation (TDMD), a process that mediates degradation of microRNAs (miRNAs). The SCF-like E3 ubiquitin-protein ligase complex acts by catalyzing ubiquitination and subsequent degradation of AGO proteins (AGO1, AGO2, AGO3 and/or AGO4), thereby exposing miRNAs for degradation. Specifically recognizes and binds AGO proteins when they are engaged with a TDMD target. May also acts as a regulator of axon guidance: specifically recognizes misfolded ROBO3 and promotes its ubiquitination and subsequent degradation. Plays an essential role for proper embryonic development of heart and lung. Controls protein quality of DAB1, a key signal molecule for brain development, thus protecting its signaling strength. Mechanistically, recognizes intrinsically disordered regions of DAB1 and eliminates misfolded DAB1 that cannot be properly phosphorylated. The polypeptide is Zinc finger SWIM domain-containing protein 8 (Bos taurus (Bovine)).